The chain runs to 373 residues: WAT1-related protein At4g30420 (373 aa).

10 helical membrane passes run 2 to 22 (AMTM…ATLV), 29 to 49 (VFIL…LYLS), 55 to 75 (IAIS…SLIG), 94 to 114 (MGSA…FLAG), 125 to 145 (GLAK…MTLL), 173 to 193 (WLIG…WLIL), 205 to 225 (LSLS…VTFF), 244 to 264 (CLYA…WAIA), 270 to 290 (FSAL…ALFF), and 294 to 314 (IYTG…TVLW). 2 EamA domains span residues 9–135 (CYAG…TILC) and 186–313 (CWSF…YTVL).

Belongs to the drug/metabolite transporter (DMT) superfamily. Plant drug/metabolite exporter (P-DME) (TC 2.A.7.4) family.

It is found in the membrane. The chain is WAT1-related protein At4g30420 from Arabidopsis thaliana (Mouse-ear cress).